The primary structure comprises 133 residues: ATP synthase epsilon chain, chloroplastic (133 aa).

This sequence belongs to the ATPase epsilon chain family. As to quaternary structure, F-type ATPases have 2 components, CF(1) - the catalytic core - and CF(0) - the membrane proton channel. CF(1) has five subunits: alpha(3), beta(3), gamma(1), delta(1), epsilon(1). CF(0) has three main subunits: a, b and c.

It is found in the plastid. Its subcellular location is the chloroplast thylakoid membrane. In terms of biological role, produces ATP from ADP in the presence of a proton gradient across the membrane. The protein is ATP synthase epsilon chain, chloroplastic of Piper cenocladum (Ant piper).